Consider the following 339-residue polypeptide: MAPQTNRKDLHLDAVLHHDMSMKKKTAGFESVEFEHCALPECDFNTIDLSTEFLGHRLALPFLISSMTGGARDAETINCRLAEAASELGIAMGVGSQRISLEESQHSGLGKTIRELAKGVPLYSNLGAAQLRDKGKLDNAQRAVEAIQADALFVHVNPMQEAFQKNGDHNWIGVLHAIEQLKPRVNVPIIIKEVGFGISGDVAQRLVDAGVDAIDVAGAGGTSWSAVEGYCQDNPHMQRAAELFRDWGIPTATCLAQIRAQHPKLPLIASGGIHNGLEAAKAIHLGANLVGQAGAVLKAATISTQLVVDHFEQMALELRLACFGTGSAKVNALTKARRL.

A substrate-binding site is contributed by 7–8; that stretch reads RK. Residues Ser65, 66-68, Ser96, and Asn125 contribute to the FMN site; that span reads SMT. Residue 96 to 98 coordinates substrate; sequence SQR. Gln160 provides a ligand contact to substrate. A Mg(2+)-binding site is contributed by Glu161. FMN contacts are provided by residues Lys192, Thr222, and 293–294; that span reads AG.

It belongs to the IPP isomerase type 2 family. Homooctamer. Dimer of tetramers. The cofactor is FMN. NADPH is required as a cofactor. Requires Mg(2+) as cofactor.

It is found in the cytoplasm. It carries out the reaction isopentenyl diphosphate = dimethylallyl diphosphate. Involved in the biosynthesis of isoprenoids. Catalyzes the 1,3-allylic rearrangement of the homoallylic substrate isopentenyl (IPP) to its allylic isomer, dimethylallyl diphosphate (DMAPP). The protein is Isopentenyl-diphosphate delta-isomerase of Vibrio parahaemolyticus serotype O3:K6 (strain RIMD 2210633).